Reading from the N-terminus, the 334-residue chain is Holliday junction branch migration complex subunit RuvB (334 aa).

Positions 1–182 are large ATPase domain (RuvB-L); sequence MDERLVSSEL…FGVLSRLEYY (182 aa). Residues L21, R22, G63, K66, T67, T68, 129–131, R172, Y182, and R219 contribute to the ATP site; that span reads EDF. T67 provides a ligand contact to Mg(2+). Positions 183–253 are small ATPAse domain (RuvB-S); it reads TRDELSEIVI…VAVDALERLQ (71 aa). A head domain (RuvB-H) region spans residues 256–334; that stretch reads KLGLDHIDRK…HFKMEVPNHD (79 aa). The DNA site is built by R311 and R316.

It belongs to the RuvB family. As to quaternary structure, homohexamer. Forms an RuvA(8)-RuvB(12)-Holliday junction (HJ) complex. HJ DNA is sandwiched between 2 RuvA tetramers; dsDNA enters through RuvA and exits via RuvB. An RuvB hexamer assembles on each DNA strand where it exits the tetramer. Each RuvB hexamer is contacted by two RuvA subunits (via domain III) on 2 adjacent RuvB subunits; this complex drives branch migration. In the full resolvosome a probable DNA-RuvA(4)-RuvB(12)-RuvC(2) complex forms which resolves the HJ.

The protein localises to the cytoplasm. It catalyses the reaction ATP + H2O = ADP + phosphate + H(+). Its function is as follows. The RuvA-RuvB-RuvC complex processes Holliday junction (HJ) DNA during genetic recombination and DNA repair, while the RuvA-RuvB complex plays an important role in the rescue of blocked DNA replication forks via replication fork reversal (RFR). RuvA specifically binds to HJ cruciform DNA, conferring on it an open structure. The RuvB hexamer acts as an ATP-dependent pump, pulling dsDNA into and through the RuvAB complex. RuvB forms 2 homohexamers on either side of HJ DNA bound by 1 or 2 RuvA tetramers; 4 subunits per hexamer contact DNA at a time. Coordinated motions by a converter formed by DNA-disengaged RuvB subunits stimulates ATP hydrolysis and nucleotide exchange. Immobilization of the converter enables RuvB to convert the ATP-contained energy into a lever motion, pulling 2 nucleotides of DNA out of the RuvA tetramer per ATP hydrolyzed, thus driving DNA branch migration. The RuvB motors rotate together with the DNA substrate, which together with the progressing nucleotide cycle form the mechanistic basis for DNA recombination by continuous HJ branch migration. Branch migration allows RuvC to scan DNA until it finds its consensus sequence, where it cleaves and resolves cruciform DNA. This Bacillus licheniformis (strain ATCC 14580 / DSM 13 / JCM 2505 / CCUG 7422 / NBRC 12200 / NCIMB 9375 / NCTC 10341 / NRRL NRS-1264 / Gibson 46) protein is Holliday junction branch migration complex subunit RuvB.